Here is a 429-residue protein sequence, read N- to C-terminus: Violacein synthase (429 aa).

3–21 (RAIIVGGGLAGGLTAIYLA) contributes to the FAD binding site.

The cofactor is FAD.

The catalysed reaction is protoviolaceinate + NADPH + O2 + H(+) = violaceinate + NADP(+) + H2O. The enzyme catalyses protoviolaceinate + NADH + O2 + H(+) = violaceinate + NAD(+) + H2O. It catalyses the reaction protodeoxyviolaceinate + NADPH + O2 + H(+) = deoxyviolaceinate + NADP(+) + H2O. It carries out the reaction protodeoxyviolaceinate + NADH + O2 + H(+) = deoxyviolaceinate + NAD(+) + H2O. It participates in pigment biosynthesis; violacein biosynthesis. In terms of biological role, catalyzes the hydroxylation of the 16-position of protoviolaceinate and protodeoxyviolaceinate to form violacein and deoxyviolacein, respectively. The chain is Violacein synthase (vioC) from Chromobacterium violaceum (strain ATCC 12472 / DSM 30191 / JCM 1249 / CCUG 213 / NBRC 12614 / NCIMB 9131 / NCTC 9757 / MK).